A 321-amino-acid chain; its full sequence is Lipoyl synthase (321 aa).

7 residues coordinate [4Fe-4S] cluster: Cys68, Cys73, Cys79, Cys94, Cys98, Cys101, and Ser308. The 218-residue stretch at 80–297 folds into the Radical SAM core domain; that stretch reads FNHGTATFMI…KVIALELGFT (218 aa).

Belongs to the radical SAM superfamily. Lipoyl synthase family. The cofactor is [4Fe-4S] cluster.

It localises to the cytoplasm. It catalyses the reaction [[Fe-S] cluster scaffold protein carrying a second [4Fe-4S](2+) cluster] + N(6)-octanoyl-L-lysyl-[protein] + 2 oxidized [2Fe-2S]-[ferredoxin] + 2 S-adenosyl-L-methionine + 4 H(+) = [[Fe-S] cluster scaffold protein] + N(6)-[(R)-dihydrolipoyl]-L-lysyl-[protein] + 4 Fe(3+) + 2 hydrogen sulfide + 2 5'-deoxyadenosine + 2 L-methionine + 2 reduced [2Fe-2S]-[ferredoxin]. It functions in the pathway protein modification; protein lipoylation via endogenous pathway; protein N(6)-(lipoyl)lysine from octanoyl-[acyl-carrier-protein]: step 2/2. Catalyzes the radical-mediated insertion of two sulfur atoms into the C-6 and C-8 positions of the octanoyl moiety bound to the lipoyl domains of lipoate-dependent enzymes, thereby converting the octanoylated domains into lipoylated derivatives. This Aliivibrio salmonicida (strain LFI1238) (Vibrio salmonicida (strain LFI1238)) protein is Lipoyl synthase.